A 723-amino-acid polypeptide reads, in one-letter code: Polyribonucleotide nucleotidyltransferase (723 aa).

Mg(2+)-binding residues include D488 and D494. Residues P555–I614 enclose the KH domain. The S1 motif domain occupies G624–K692. Residues K692 to K723 are disordered. Residues A693–K723 show a composition bias toward basic and acidic residues.

The protein belongs to the polyribonucleotide nucleotidyltransferase family. Mg(2+) is required as a cofactor.

It localises to the cytoplasm. The catalysed reaction is RNA(n+1) + phosphate = RNA(n) + a ribonucleoside 5'-diphosphate. Involved in mRNA degradation. Catalyzes the phosphorolysis of single-stranded polyribonucleotides processively in the 3'- to 5'-direction. The chain is Polyribonucleotide nucleotidyltransferase from Listeria welshimeri serovar 6b (strain ATCC 35897 / DSM 20650 / CCUG 15529 / CIP 8149 / NCTC 11857 / SLCC 5334 / V8).